We begin with the raw amino-acid sequence, 194 residues long: Peptidyl-tRNA hydrolase (194 aa).

Tyrosine 17 is a binding site for tRNA. The Proton acceptor role is filled by histidine 22. TRNA-binding residues include tyrosine 68, asparagine 70, and asparagine 116.

Belongs to the PTH family. As to quaternary structure, monomer.

It is found in the cytoplasm. It catalyses the reaction an N-acyl-L-alpha-aminoacyl-tRNA + H2O = an N-acyl-L-amino acid + a tRNA + H(+). In terms of biological role, hydrolyzes ribosome-free peptidyl-tRNAs (with 1 or more amino acids incorporated), which drop off the ribosome during protein synthesis, or as a result of ribosome stalling. Functionally, catalyzes the release of premature peptidyl moieties from peptidyl-tRNA molecules trapped in stalled 50S ribosomal subunits, and thus maintains levels of free tRNAs and 50S ribosomes. The chain is Peptidyl-tRNA hydrolase from Pseudomonas syringae pv. syringae (strain B728a).